We begin with the raw amino-acid sequence, 376 residues long: Dihydroorotate dehydrogenase (quinone) (376 aa).

FMN contacts are provided by residues 78 to 82 (AGFDK) and Thr-102. Lys-82 lines the substrate pocket. A substrate-binding site is contributed by 127-131 (NRMGF). FMN contacts are provided by Asn-157 and Asn-190. Substrate is bound at residue Asn-190. Catalysis depends on Ser-193, which acts as the Nucleophile. Asn-195 contributes to the substrate binding site. Residues Lys-228 and Thr-256 each coordinate FMN. 257–258 (NT) contacts substrate. FMN is bound by residues Gly-286, Gly-315, and 336-337 (YT).

Belongs to the dihydroorotate dehydrogenase family. Type 2 subfamily. In terms of assembly, monomer. Requires FMN as cofactor.

It localises to the cell membrane. It carries out the reaction (S)-dihydroorotate + a quinone = orotate + a quinol. It participates in pyrimidine metabolism; UMP biosynthesis via de novo pathway; orotate from (S)-dihydroorotate (quinone route): step 1/1. In terms of biological role, catalyzes the conversion of dihydroorotate to orotate with quinone as electron acceptor. This is Dihydroorotate dehydrogenase (quinone) from Trichormus variabilis (strain ATCC 29413 / PCC 7937) (Anabaena variabilis).